A 1096-amino-acid polypeptide reads, in one-letter code: Lysine-specific demethylase 4B (1096 aa).

Positions Ile15–Arg57 constitute a JmjN domain. Tyr133 contributes to the 2-oxoglutarate binding site. A JmjC domain is found at Val146–Cys309. Fe cation contacts are provided by His189 and Glu191. The 2-oxoglutarate site is built by Asn199 and Lys207. Cys235 and His241 together coordinate Zn(2+). Lys242 lines the 2-oxoglutarate pocket. A Fe cation-binding site is contributed by His277. Residues Cys307 and Cys309 each contribute to the Zn(2+) site. Basic residues predominate over residues Leu369–Lys382. Disordered stretches follow at residues Leu369–Ala478 and Lys557–Pro649. Residues Pro391 to Gly406 show a composition bias toward low complexity. A compositionally biased stretch (acidic residues) spans Gly413–Pro425. Positions His430 to Gly443 are enriched in basic and acidic residues. Positions Lys444 to Ser458 are enriched in basic residues. A Phosphoserine modification is found at Ser566. Position 602 is an N6-acetyllysine (Lys602). A compositionally biased stretch (acidic residues) spans Ser632–Asp648. The PHD-type 1 zinc-finger motif lies at Met731–Ala789. The segment at Thr794–Ala827 adopts a C2HC pre-PHD-type zinc-finger fold. The PHD-type 2 zinc finger occupies Leu850 to Lys907. Tudor domains follow at residues Arg917–Leu974 and Gly975–Pro1031. The interval Arg1037–Gly1073 is disordered. Phosphothreonine is present on Thr1065.

Belongs to the JHDM3 histone demethylase family. Fe(2+) is required as a cofactor.

It is found in the nucleus. It carries out the reaction N(6),N(6),N(6)-trimethyl-L-lysyl(9)-[histone H3] + 2 2-oxoglutarate + 2 O2 = N(6)-methyl-L-lysyl(9)-[histone H3] + 2 formaldehyde + 2 succinate + 2 CO2. Its function is as follows. Histone demethylase that specifically demethylates 'Lys-9' of histone H3, thereby playing a role in histone code. Does not demethylate histone H3 'Lys-4', H3 'Lys-27', H3 'Lys-36' nor H4 'Lys-20'. Only able to demethylate trimethylated H3 'Lys-9', with a weaker activity than KDM4A, KDM4C and KDM4D. Demethylation of Lys residue generates formaldehyde and succinate. Plays a critical role in the development of the central nervous system (CNS). The polypeptide is Lysine-specific demethylase 4B (KDM4B) (Homo sapiens (Human)).